Reading from the N-terminus, the 396-residue chain is L-lactate dehydrogenase (396 aa).

Positions 1–380 (MIISAASDYR…TQDSLVQVLG (380 aa)) constitute an FMN hydroxy acid dehydrogenase domain. Substrate is bound at residue tyrosine 24. Serine 106 and glutamine 127 together coordinate FMN. Position 129 (tyrosine 129) interacts with substrate. Threonine 155 lines the FMN pocket. Substrate is bound at residue arginine 164. Residue lysine 251 coordinates FMN. Residue histidine 275 is the Proton acceptor of the active site. Arginine 278 is a binding site for substrate. Position 306–330 (306–330 (DSGIRNGLDVVRMIALGADTVLLGR)) interacts with FMN.

The protein belongs to the FMN-dependent alpha-hydroxy acid dehydrogenase family. It depends on FMN as a cofactor.

The protein localises to the cell inner membrane. It carries out the reaction (S)-lactate + A = pyruvate + AH2. Its function is as follows. Catalyzes the conversion of L-lactate to pyruvate. Is coupled to the respiratory chain. This is L-lactate dehydrogenase from Escherichia coli O1:K1 / APEC.